The following is a 257-amino-acid chain: Large ribosomal subunit protein uL2 (257 aa).

Positions 207-231 (VEHPFGGGNHQHIGKPSTIRRDAPA) are disordered.

This sequence belongs to the universal ribosomal protein uL2 family. As to quaternary structure, component of the large ribosomal subunit.

Its subcellular location is the cytoplasm. Component of the large ribosomal subunit. The ribosome is a large ribonucleoprotein complex responsible for the synthesis of proteins in the cell. The sequence is that of Large ribosomal subunit protein uL2 (rpl8) from Xenopus tropicalis (Western clawed frog).